Here is a 360-residue protein sequence, read N- to C-terminus: Magnesium transporter NIPA2 (360 aa).

Topologically, residues 1–9 (MSQGRGKYD) are extracellular. Residues 10 to 30 (FYIGLGLAMSSSIFIGGSFIL) traverse the membrane as a helical segment. At 31 to 56 (KKKGLLRLARKGSMRAGQGGHAYLKE) the chain is on the cytoplasmic side. Residues 57-77 (WLWWAGLLSMGAGEVANFAAY) form a helical membrane-spanning segment. A topological domain (extracellular) is located at residue Ala78. A helical membrane pass occupies residues 79–99 (FAPATLVTPLGALSVLVSAIL). Residues 100 to 107 (SSYFLNER) are Cytoplasmic-facing. The chain crosses the membrane as a helical span at residues 108 to 128 (LNLHGKIGCLLSILGSTVMVI). The Extracellular portion of the chain corresponds to 129–149 (HAPKEEEIETLNEMSHKLGDP). The chain crosses the membrane as a helical span at residues 150 to 170 (GFVVFATLVVIVALILIFVVG). Residues 171 to 175 (PRHGQ) lie on the Cytoplasmic side of the membrane. A helical membrane pass occupies residues 176–196 (TNILVYITICSVIGAFSVSCV). The Extracellular segment spans residues 197–215 (KGLGIAIKELFAGKPVLRH). Residues 216–236 (PLAWILLLSLIVCVSTQINYL) traverse the membrane as a helical segment. The Cytoplasmic portion of the chain corresponds to 237–246 (NRALDIFNTS). A helical membrane pass occupies residues 247–267 (IVTPIYYVFFTTSVLTCSAIL). Residues 268 to 278 (FKEWQDMPVDD) lie on the Extracellular side of the membrane. A helical transmembrane segment spans residues 279-299 (VIGTLSGFFTIIVGIFLLHAF). The Cytoplasmic segment spans residues 300 to 360 (KDVSFSLASL…SRRNGNLTAF (61 aa)).

It belongs to the NIPA family. As to expression, widely expressed.

It localises to the cell membrane. Its subcellular location is the early endosome. The enzyme catalyses Mg(2+)(in) = Mg(2+)(out). In terms of biological role, acts as a selective Mg(2+) transporter. The polypeptide is Magnesium transporter NIPA2 (NIPA2) (Homo sapiens (Human)).